Here is a 167-residue protein sequence, read N- to C-terminus: ATP synthase subunit b (167 aa).

Residues 9-29 (ALPLGNMLFIIIAFLLLMLIL) form a helical membrane-spanning segment.

This sequence belongs to the ATPase B chain family. In terms of assembly, F-type ATPases have 2 components, F(1) - the catalytic core - and F(0) - the membrane proton channel. F(1) has five subunits: alpha(3), beta(3), gamma(1), delta(1), epsilon(1). F(0) has three main subunits: a(1), b(2) and c(10-14). The alpha and beta chains form an alternating ring which encloses part of the gamma chain. F(1) is attached to F(0) by a central stalk formed by the gamma and epsilon chains, while a peripheral stalk is formed by the delta and b chains.

It localises to the cell membrane. Functionally, f(1)F(0) ATP synthase produces ATP from ADP in the presence of a proton or sodium gradient. F-type ATPases consist of two structural domains, F(1) containing the extramembraneous catalytic core and F(0) containing the membrane proton channel, linked together by a central stalk and a peripheral stalk. During catalysis, ATP synthesis in the catalytic domain of F(1) is coupled via a rotary mechanism of the central stalk subunits to proton translocation. Component of the F(0) channel, it forms part of the peripheral stalk, linking F(1) to F(0). The chain is ATP synthase subunit b from Leuconostoc mesenteroides subsp. mesenteroides (strain ATCC 8293 / DSM 20343 / BCRC 11652 / CCM 1803 / JCM 6124 / NCDO 523 / NBRC 100496 / NCIMB 8023 / NCTC 12954 / NRRL B-1118 / 37Y).